The primary structure comprises 253 residues: Large ribosomal subunit protein uL10m (253 aa).

Residues 1-24 (MANLMQRSLPLTTTRTPVLQFLRF) constitute a mitochondrion transit peptide.

Belongs to the universal ribosomal protein uL10 family. As to quaternary structure, component of the mitochondrial ribosome large subunit (39S) which comprises a 16S rRNA and about 50 distinct proteins.

Its subcellular location is the mitochondrion. In Drosophila pseudoobscura pseudoobscura (Fruit fly), this protein is Large ribosomal subunit protein uL10m (mRpL10).